Here is a 93-residue protein sequence, read N- to C-terminus: Phosphoribosyl-ATP pyrophosphatase (93 aa).

Belongs to the PRA-PH family.

The protein localises to the cytoplasm. The enzyme catalyses 1-(5-phospho-beta-D-ribosyl)-ATP + H2O = 1-(5-phospho-beta-D-ribosyl)-5'-AMP + diphosphate + H(+). It functions in the pathway amino-acid biosynthesis; L-histidine biosynthesis; L-histidine from 5-phospho-alpha-D-ribose 1-diphosphate: step 2/9. In Mycobacterium leprae (strain Br4923), this protein is Phosphoribosyl-ATP pyrophosphatase.